Consider the following 377-residue polypeptide: Alanine racemase (377 aa).

K37 functions as the Proton acceptor; specific for D-alanine in the catalytic mechanism. Residue K37 is modified to N6-(pyridoxal phosphate)lysine. Residue R135 coordinates substrate. Y271 (proton acceptor; specific for L-alanine) is an active-site residue. M319 provides a ligand contact to substrate.

This sequence belongs to the alanine racemase family. Requires pyridoxal 5'-phosphate as cofactor.

It catalyses the reaction L-alanine = D-alanine. The protein operates within amino-acid biosynthesis; D-alanine biosynthesis; D-alanine from L-alanine: step 1/1. Catalyzes the interconversion of L-alanine and D-alanine. May also act on other amino acids. The polypeptide is Alanine racemase (alr) (Helicobacter pylori (strain G27)).